The following is a 39-amino-acid chain: MTRTAVLLLTLLFLVAMAASDKIKTREVCWNEEECENWE.

The N-terminal stretch at 1 to 20 (MTRTAVLLLTLLFLVAMAAS) is a signal peptide. An intrachain disulfide couples Cys29 to Cys35.

Expressed by the venom duct.

It localises to the secreted. In terms of biological role, probable neurotoxin. This Californiconus californicus (California cone) protein is Contryphan-Cal4.